The chain runs to 329 residues: Segregation and condensation protein B (329 aa).

Disordered stretches follow at residues Met1–Asp39, Ile252–Ala274, and Ser286–Glu329.

This sequence belongs to the ScpB family. As to quaternary structure, homodimer. Homodimerization may be required to stabilize the binding of ScpA to the Smc head domains. Component of the Structural Maintenance of Chromosome (SMC) condensin-like complex composed of ScpA, ScpB and the Smc homodimer. ScpA and ScpB bind to the head domain of Smc, the presence of the three proteins is required for the association of the complex with DNA.

It is found in the cytoplasm. Functionally, a conditionally essential component of the chromosome segregation machinery. Required for chromosome condensation and partitioning. Important for positioning and anchoring of ParB-parS complexes (ori of replication) in the subpolar region, and of the ter replication site, as well as for segration of the ParB-parS complex and thus chromosome segregation. Probably acts via the formation of a condensin-like complex containing Smc, ScpA and ScpB that pulls DNA away from mid-cell into both cell halves. The polypeptide is Segregation and condensation protein B (Myxococcus xanthus (strain DK1622)).